A 51-amino-acid polypeptide reads, in one-letter code: Small ribosomal subunit protein uS14 (51 aa).

Cysteine 16, cysteine 19, cysteine 34, and cysteine 37 together coordinate Zn(2+).

This sequence belongs to the universal ribosomal protein uS14 family. Zinc-binding uS14 subfamily. As to quaternary structure, part of the 30S ribosomal subunit. Zn(2+) serves as cofactor.

Binds 16S rRNA, required for the assembly of 30S particles. The polypeptide is Small ribosomal subunit protein uS14 (Archaeoglobus fulgidus (strain ATCC 49558 / DSM 4304 / JCM 9628 / NBRC 100126 / VC-16)).